Reading from the N-terminus, the 549-residue chain is Probable glucomannan 4-beta-mannosyltransferase 4 (549 aa).

A helical membrane pass occupies residues 35–55; it reads VAPVLQFAVWACMAMSVMLVL. Asp-151 is an active-site residue. Positions 210 and 212 each coordinate substrate. Asp-304 is a catalytic residue. Helical transmembrane passes span 383–403, 406–426, 497–517, and 523–543; these read VVAP…SVMV, VSIP…MNAI, IYIP…YDLV, and YYLY…GFAG.

The protein belongs to the glycosyltransferase 2 family. Plant cellulose synthase-like A subfamily.

It is found in the golgi apparatus membrane. It catalyses the reaction GDP-mannose + (glucomannan)n = GDP + (glucomannan)n+1.. Functionally, probable mannan synthase which consists of a 4-beta-mannosyltransferase activity on mannan using GDP-mannose. The beta-1,4-mannan product is the backbone for galactomannan synthesis by galactomannan galactosyltransferase. Galactomannan is a noncellulosic polysaccharides of plant cell wall. The polypeptide is Probable glucomannan 4-beta-mannosyltransferase 4 (Oryza sativa subsp. japonica (Rice)).